The chain runs to 179 residues: CDP-archaeol synthase (179 aa).

Helical transmembrane passes span 53–73, 88–108, 120–140, and 145–165; these read FVGG…IEKL, FTLT…GSFI, FLIV…SLYP, and LFTA…HMGI.

The protein belongs to the CDP-archaeol synthase family. Mg(2+) is required as a cofactor.

The protein localises to the cell membrane. The enzyme catalyses 2,3-bis-O-(geranylgeranyl)-sn-glycerol 1-phosphate + CTP + H(+) = CDP-2,3-bis-O-(geranylgeranyl)-sn-glycerol + diphosphate. Its pathway is membrane lipid metabolism; glycerophospholipid metabolism. Catalyzes the formation of CDP-2,3-bis-(O-geranylgeranyl)-sn-glycerol (CDP-archaeol) from 2,3-bis-(O-geranylgeranyl)-sn-glycerol 1-phosphate (DGGGP) and CTP. This reaction is the third ether-bond-formation step in the biosynthesis of archaeal membrane lipids. Can use CTP or dCTP, but not ATP, GTP or TTP. This is CDP-archaeol synthase from Archaeoglobus fulgidus (strain ATCC 49558 / DSM 4304 / JCM 9628 / NBRC 100126 / VC-16).